A 184-amino-acid chain; its full sequence is MIKAIEGVVTKKEPAFAVLKTNSGVSYGIFISLFCSAKLSKGEKVELAITQIIREDANLLYGFLDANEQKMFEMLIKLNGIGASTAMAVCSSLSSQAFTNAIISGDADTFKSVPGIGPKTARRIIAELSDTKLISDESVPSYQNEALLALEALGFKREKIVKILPDCKSENTSDLIKEALKKLG.

Residues 1–64 (MIKAIEGVVT…EDANLLYGFL (64 aa)) are domain I. Residues 65–134 (DANEQKMFEM…IAELSDTKLI (70 aa)) are domain II. The flexible linker stretch occupies residues 134 to 137 (ISDE). The tract at residues 138 to 184 (SVPSYQNEALLALEALGFKREKIVKILPDCKSENTSDLIKEALKKLG) is domain III.

It belongs to the RuvA family. In terms of assembly, homotetramer. Forms an RuvA(8)-RuvB(12)-Holliday junction (HJ) complex. HJ DNA is sandwiched between 2 RuvA tetramers; dsDNA enters through RuvA and exits via RuvB. An RuvB hexamer assembles on each DNA strand where it exits the tetramer. Each RuvB hexamer is contacted by two RuvA subunits (via domain III) on 2 adjacent RuvB subunits; this complex drives branch migration. In the full resolvosome a probable DNA-RuvA(4)-RuvB(12)-RuvC(2) complex forms which resolves the HJ.

The protein localises to the cytoplasm. Functionally, the RuvA-RuvB-RuvC complex processes Holliday junction (HJ) DNA during genetic recombination and DNA repair, while the RuvA-RuvB complex plays an important role in the rescue of blocked DNA replication forks via replication fork reversal (RFR). RuvA specifically binds to HJ cruciform DNA, conferring on it an open structure. The RuvB hexamer acts as an ATP-dependent pump, pulling dsDNA into and through the RuvAB complex. HJ branch migration allows RuvC to scan DNA until it finds its consensus sequence, where it cleaves and resolves the cruciform DNA. In Campylobacter concisus (strain 13826), this protein is Holliday junction branch migration complex subunit RuvA.